A 129-amino-acid chain; its full sequence is uncharacterized protein (129 aa).

The tract at residues Met-1 to Arg-129 is disordered. The span at Glu-18 to Thr-46 shows a compositional bias: basic and acidic residues. The span at Ser-47–Glu-59 shows a compositional bias: low complexity. Over residues Leu-70–Thr-97 the composition is skewed to polar residues.

This is an uncharacterized protein from Mus musculus (Mouse).